The following is a 378-amino-acid chain: Ribosomal RNA large subunit methyltransferase G (378 aa).

It belongs to the methyltransferase superfamily. RlmG family.

It localises to the cytoplasm. It carries out the reaction guanosine(1835) in 23S rRNA + S-adenosyl-L-methionine = N(2)-methylguanosine(1835) in 23S rRNA + S-adenosyl-L-homocysteine + H(+). In terms of biological role, specifically methylates the guanine in position 1835 (m2G1835) of 23S rRNA. The chain is Ribosomal RNA large subunit methyltransferase G from Shigella boydii serotype 4 (strain Sb227).